A 216-amino-acid polypeptide reads, in one-letter code: ATP phosphoribosyltransferase (216 aa).

The protein belongs to the ATP phosphoribosyltransferase family. Short subfamily. Heteromultimer composed of HisG and HisZ subunits.

The protein localises to the cytoplasm. The catalysed reaction is 1-(5-phospho-beta-D-ribosyl)-ATP + diphosphate = 5-phospho-alpha-D-ribose 1-diphosphate + ATP. The protein operates within amino-acid biosynthesis; L-histidine biosynthesis; L-histidine from 5-phospho-alpha-D-ribose 1-diphosphate: step 1/9. Its function is as follows. Catalyzes the condensation of ATP and 5-phosphoribose 1-diphosphate to form N'-(5'-phosphoribosyl)-ATP (PR-ATP). Has a crucial role in the pathway because the rate of histidine biosynthesis seems to be controlled primarily by regulation of HisG enzymatic activity. The chain is ATP phosphoribosyltransferase from Acidovorax ebreus (strain TPSY) (Diaphorobacter sp. (strain TPSY)).